The chain runs to 206 residues: Probable glutathione S-transferase 8 (206 aa).

In terms of domain architecture, GST N-terminal spans 2–79 (VHYKLSYFPI…FLARQFGING (78 aa)). Residues Tyr8, Trp39, Lys43, 49–51 (GQL), and 63–64 (QS) each bind glutathione. In terms of domain architecture, GST C-terminal spans 81-206 (CAWEEAQVNS…WLETRPETQF (126 aa)).

This sequence belongs to the GST superfamily. Sigma family.

The catalysed reaction is RX + glutathione = an S-substituted glutathione + a halide anion + H(+). Its function is as follows. Conjugation of reduced glutathione to a wide number of exogenous and endogenous hydrophobic electrophiles. The polypeptide is Probable glutathione S-transferase 8 (gst-8) (Caenorhabditis elegans).